Reading from the N-terminus, the 532-residue chain is Collagen alpha-1(XXIII) chain (532 aa).

The Cytoplasmic portion of the chain corresponds to 1 to 23; sequence MGAGERAAGGGGTQDPGAGCGAR. The helical; Signal-anchor for type II membrane protein transmembrane segment at 24-45 threads the bilayer; it reads ALGALCLLLSVGSATACLLLGA. Residues 46 to 532 are Extracellular-facing; sequence QAAALHGRVA…GLPVPGCWHK (487 aa). A disordered region spans residues 102-532; the sequence is PSECICPPGP…GLPVPGCWHK (431 aa). Collagen-like domains are found at residues 108–163, 173–232, 242–297, and 313–372; these read PPGP…FGPR, GPPG…PGKK, GLPG…EQGD, and GPPG…MGLS. 2 stretches are compositionally biased toward low complexity: residues 129–145 and 157–172; these read QSGR…DGKP and PGDF…DGAA. 3 stretches are compositionally biased toward pro residues: residues 174 to 184, 241 to 250, and 314 to 326; these read PPGPPGPPGAR, PGLPGPPGPK, and PPGP…PPGI. Composition is skewed to basic and acidic residues over residues 342-354 and 380-393; these read DGEK…KGDP and PKGE…DHLQ. Over residues 403–414 the composition is skewed to pro residues; it reads PGPPGPPGPPGP. Collagen-like domains are found at residues 404 to 452 and 455 to 514; these read GPPG…GPPG and GLPG…PGLD. Basic and acidic residues-rich tracts occupy residues 427–441 and 478–495; these read DGAK…ERGP and RGEK…ERGV.

Homotrimer. In terms of processing, undergoes proteolytic cleavage by furin protease to yield a 60 kDa soluble form that forms a homotrimer and exhibits a low affinity interaction with heparin.

It is found in the cell membrane. This is Collagen alpha-1(XXIII) chain (Col23a1) from Rattus norvegicus (Rat).